A 182-amino-acid chain; its full sequence is Putative colanic acid biosynthesis acetyltransferase WcaF (182 aa).

It belongs to the transferase hexapeptide repeat family.

It participates in slime biogenesis; slime polysaccharide biosynthesis. The protein is Putative colanic acid biosynthesis acetyltransferase WcaF (wcaF) of Shigella flexneri.